A 121-amino-acid chain; its full sequence is Small ribosomal subunit protein bS6 (121 aa).

The protein belongs to the bacterial ribosomal protein bS6 family.

In terms of biological role, binds together with bS18 to 16S ribosomal RNA. This is Small ribosomal subunit protein bS6 (rpsF) from Rickettsia prowazekii (strain Madrid E).